The primary structure comprises 481 residues: MSPQTETKASVGFKAGVKEYKLTYYTPEYETKDTDILAAFRVTPQPGVPPEEAGAAVAAESSTGTWTAVWTDGLTSLDRYKGRCYHIEPVPGEENQYIAYVAYPLDLFEEGSVTNMFTSIVGNVFGFKALRALRLEDLRVPPAYIKTFQGPPHGIQVERDKLNKYGRPLLGCTIKPKLGLSAKNYGRAVYECLRGGLDFTKDDENVNSQPFMRWRDRFCFCAEALFKAQAETGEIKGHYLNATAGTCEEMIKRAVFARELGVPIVMHDYLTGGFTANTSLAHYCRDNGLLLHIHRAMHAVIDRQKNHGMHFRVLAKGLRMSGGDHIHAGTVVGKLEGERDITLGFVDLLRDDFIEKDRSRGIYFTQDWVSLPGVIPVASGGIHVWHMPALTEIFGDDSVLQFGGGTLGHPWGNAPGAVANRVALEACVKARNEGRDLAAEGNEIIREASKWSPELAAACEVWKEIRFNFEAMDKLDKEKDL.

The propeptide occupies 1 to 2 (MS). P3 carries the post-translational modification N-acetylproline. N6,N6,N6-trimethyllysine is present on K14. Substrate contacts are provided by N123 and T173. K175 acts as the Proton acceptor in catalysis. K177 contacts substrate. Mg(2+) contacts are provided by K201, D203, and E204. K201 carries the N6-carboxylysine modification. Residue H294 is the Proton acceptor of the active site. The substrate site is built by R295, H327, and S379.

Belongs to the RuBisCO large chain family. Type I subfamily. Heterohexadecamer of 8 large chains and 8 small chains; disulfide-linked. The disulfide link is formed within the large subunit homodimers. It depends on Mg(2+) as a cofactor. In terms of processing, the disulfide bond which can form in the large chain dimeric partners within the hexadecamer appears to be associated with oxidative stress and protein turnover.

The protein resides in the plastid. It localises to the chloroplast. The catalysed reaction is 2 (2R)-3-phosphoglycerate + 2 H(+) = D-ribulose 1,5-bisphosphate + CO2 + H2O. It catalyses the reaction D-ribulose 1,5-bisphosphate + O2 = 2-phosphoglycolate + (2R)-3-phosphoglycerate + 2 H(+). RuBisCO catalyzes two reactions: the carboxylation of D-ribulose 1,5-bisphosphate, the primary event in carbon dioxide fixation, as well as the oxidative fragmentation of the pentose substrate in the photorespiration process. Both reactions occur simultaneously and in competition at the same active site. The sequence is that of Ribulose bisphosphate carboxylase large chain from Coffea arabica (Arabian coffee).